The following is a 495-amino-acid chain: Glutamate--tRNA ligase (495 aa).

A 'HIGH' region motif is present at residues 12–22 (PSPTGHLHIGN). The 'KMSKS' region motif lies at 259–263 (KLSKR). K262 provides a ligand contact to ATP.

It belongs to the class-I aminoacyl-tRNA synthetase family. Glutamate--tRNA ligase type 1 subfamily. As to quaternary structure, monomer.

The protein resides in the cytoplasm. The enzyme catalyses tRNA(Glu) + L-glutamate + ATP = L-glutamyl-tRNA(Glu) + AMP + diphosphate. Functionally, catalyzes the attachment of glutamate to tRNA(Glu) in a two-step reaction: glutamate is first activated by ATP to form Glu-AMP and then transferred to the acceptor end of tRNA(Glu). This is Glutamate--tRNA ligase from Latilactobacillus sakei subsp. sakei (strain 23K) (Lactobacillus sakei subsp. sakei).